The following is a 988-amino-acid chain: DExH-box ATP-dependent RNA helicase DExH9 (988 aa).

Residues M1 to S27 are disordered. A Helicase ATP-binding domain is found at I76–C232. A89–T96 lines the ATP pocket. The DEVH box motif lies at D180–H183. A Helicase C-terminal domain is found at D307 to R509.

It belongs to the DExH box helicase family. SKI2 subfamily. As to expression, ubiquitous but preferentially expressed in active tissues.

The protein resides in the nucleus. The protein localises to the nucleolus. It catalyses the reaction ATP + H2O = ADP + phosphate + H(+). Its function is as follows. ATP-dependent RNA helicase that associates with the RNA exosome complex. Required for proper rRNA biogenesis and development. Involved in the 3'-processing of the 7S pre-RNA to the mature 5.8S rRNA and also in the removal of rRNA maturation by-products. This is DExH-box ATP-dependent RNA helicase DExH9 from Arabidopsis thaliana (Mouse-ear cress).